The chain runs to 591 residues: MKKISLPKIGIRPVIDGRRMGVRESLEEQTMNMAKATAALITEKIRHACGAQVECVIADTCIAGMAESAACEEKFSSQNVGVTITVTPCWCYGSETIDMDPMRPKAIWGFNGTERPGAVYLAAALAAHSQKGIPAFSIYGHDVQDADDTSIPADVEEKLLRFARAGLAVASMKGKSYLSVGGVSMGIAGSIVDHNFFESWLGMKVQAVDMTELRRRIDQKIYDEAELEMALAWADKNFRYGEDQNASQYKRNEAQNRAVLKESLLMAMCIRDMMQGNKTLADKGLVEESLGYNAIAAGFQGQRHWTDQYPNGDTAEALLNSSFDWNGVREPFVVATENDSLNGVAMLFGHQLTGTAQIFADVRTYWSPEAVERVTGQALSALAEHGIIHLINSGSAALDGACKQRDSEGKPTMKPHWEISQQEADACLAATEWCPAIHEYFRGGGYSSRFLTEGGVPFTMTRVNIIKGLGPVLQIAEGWSVELPKAMHDQLDARTNSTWPTTWFAPRLIGKGPFTDVYSVMANWGANHGVLTIGHVGADFITLAAMLRIPVCMHNVEEAKIYRPSAWAAHGMDIEGQDYRACQNYGPLYKR.

Residues glutamate 337 and aspartate 361 each act as proton acceptor in the active site. Mn(2+) is bound by residues glutamate 337, aspartate 361, and histidine 528.

Belongs to the L-fucose isomerase family. Homohexamer. Requires Mn(2+) as cofactor.

It is found in the cytoplasm. The enzyme catalyses L-fucose = L-fuculose. Its pathway is carbohydrate degradation; L-fucose degradation; L-lactaldehyde and glycerone phosphate from L-fucose: step 1/3. Functionally, converts the aldose L-fucose into the corresponding ketose L-fuculose. The chain is L-fucose isomerase from Salmonella typhi.